The following is a 236-amino-acid chain: 2,3,4,5-tetrahydropyridine-2,6-dicarboxylate N-acetyltransferase (236 aa).

The protein belongs to the transferase hexapeptide repeat family. DapH subfamily.

The catalysed reaction is (S)-2,3,4,5-tetrahydrodipicolinate + acetyl-CoA + H2O = L-2-acetamido-6-oxoheptanedioate + CoA. The protein operates within amino-acid biosynthesis; L-lysine biosynthesis via DAP pathway; LL-2,6-diaminopimelate from (S)-tetrahydrodipicolinate (acetylase route): step 1/3. Catalyzes the transfer of an acetyl group from acetyl-CoA to tetrahydrodipicolinate. The sequence is that of 2,3,4,5-tetrahydropyridine-2,6-dicarboxylate N-acetyltransferase from Lactobacillus helveticus (strain DPC 4571).